The chain runs to 208 residues: Thymidylate kinase (208 aa).

Residue 10-17 (GPEGSGKT) participates in ATP binding.

It belongs to the thymidylate kinase family.

It carries out the reaction dTMP + ATP = dTDP + ADP. In terms of biological role, phosphorylation of dTMP to form dTDP in both de novo and salvage pathways of dTTP synthesis. The polypeptide is Thymidylate kinase (Bacillus cereus (strain B4264)).